A 181-amino-acid chain; its full sequence is ATP synthase subunit b 2 (181 aa).

The span at 1–12 shows a compositional bias: low complexity; that stretch reads MAEGHGTTAHTG. The segment at 1–20 is disordered; it reads MAEGHGTTAHTGAEGGHKAP. A helical transmembrane segment spans residues 33-53; that stretch reads LVSLLIAFVALYLIVSKVALP.

The protein belongs to the ATPase B chain family. As to quaternary structure, F-type ATPases have 2 components, F(1) - the catalytic core - and F(0) - the membrane proton channel. F(1) has five subunits: alpha(3), beta(3), gamma(1), delta(1), epsilon(1). F(0) has three main subunits: a(1), b(2) and c(10-14). The alpha and beta chains form an alternating ring which encloses part of the gamma chain. F(1) is attached to F(0) by a central stalk formed by the gamma and epsilon chains, while a peripheral stalk is formed by the delta and b chains.

The protein resides in the cell inner membrane. F(1)F(0) ATP synthase produces ATP from ADP in the presence of a proton or sodium gradient. F-type ATPases consist of two structural domains, F(1) containing the extramembraneous catalytic core and F(0) containing the membrane proton channel, linked together by a central stalk and a peripheral stalk. During catalysis, ATP synthesis in the catalytic domain of F(1) is coupled via a rotary mechanism of the central stalk subunits to proton translocation. Functionally, component of the F(0) channel, it forms part of the peripheral stalk, linking F(1) to F(0). The b'-subunit is a diverged and duplicated form of b found in plants and photosynthetic bacteria. The chain is ATP synthase subunit b 2 (atpF2) from Rhodopseudomonas palustris (strain BisA53).